A 161-amino-acid chain; its full sequence is Large ribosomal subunit protein uL15 (161 aa).

The disordered stretch occupies residues 1–47 (MKLHELHDNPGANRKKKRVARGPGSGKGKTAGRGIKGQTSRSGVALN). The span at 23–35 (PGSGKGKTAGRGI) shows a compositional bias: gly residues.

Belongs to the universal ribosomal protein uL15 family. As to quaternary structure, part of the 50S ribosomal subunit.

Functionally, binds to the 23S rRNA. The protein is Large ribosomal subunit protein uL15 of Paracoccus denitrificans (strain Pd 1222).